The primary structure comprises 315 residues: Calumenin (315 aa).

The first 19 residues, 1–19, serve as a signal peptide directing secretion; the sequence is MDLRQFLMCLSLCTAFALS. S44 is subject to Phosphoserine. Position 47 is a phosphotyrosine (Y47). T65 carries the phosphothreonine modification. EF-hand domains are found at residues 68–103, 104–139, 151–186, 188–223, 229–264, and 265–300; these read ESKE…AQKK, YIYD…TYLD, QMMV…EEYD, MKDI…HDGN, WVKT…SDYD, and HAEA…FVGS. S69 bears the Phosphoserine mark. Positions 81, 83, 85, 92, 117, 119, 121, and 128 each coordinate Ca(2+). N131 is a glycosylation site (N-linked (GlcNAc...) asparagine). A Ca(2+)-binding site is contributed by D164. K165 bears the N6-acetyllysine mark. Ca(2+) contacts are provided by D166, D168, E175, D201, N203, D205, E212, D242, N244, D246, K248, and E253. Residue T254 is modified to Phosphothreonine. Residues S261 and S277 each carry the phosphoserine modification. Ca(2+)-binding residues include D278, N280, D282, K284, and E289. A Prevents secretion from ER motif is present at residues 312 to 315; that stretch reads HDEF.

It belongs to the CREC family. As to quaternary structure, interacts with GGCX.

Its subcellular location is the endoplasmic reticulum membrane. It is found in the golgi apparatus. The protein localises to the secreted. It localises to the melanosome. The protein resides in the sarcoplasmic reticulum lumen. Functionally, involved in regulation of vitamin K-dependent carboxylation of multiple N-terminal glutamate residues. Seems to inhibit gamma-carboxylase GGCX. Binds 7 calcium ions with a low affinity. The protein is Calumenin (CALU) of Bos taurus (Bovine).